A 438-amino-acid polypeptide reads, in one-letter code: Xylose isomerase (438 aa).

Mg(2+)-binding residues include aspartate 306 and aspartate 308.

It belongs to the xylose isomerase family. As to quaternary structure, homotetramer. Requires Mg(2+) as cofactor.

The protein resides in the cytoplasm. The catalysed reaction is alpha-D-xylose = alpha-D-xylulofuranose. This is Xylose isomerase from Pseudomonas fluorescens (strain SBW25).